The following is an 885-amino-acid chain: MIVNASSESPRVQPQLYRTASISTIVQAEQQDRFLQLGELNDLVTFLNSGTKRLEIAEVLSKNADILVAKAADKIFVGGSAISYLERPQASFVEFDNISMTQKEMSGNVQVNLLSNTSSNVISNDTLPPGFKPINVVRYGSTRMKKSLRDLDWFLRYLTYAIIAGDPNILSVNIRGLKDLISNACSSAAATVALREMRKSAISIFDNDLSAQEIVQQYFNILITEFDSPSLTDKIRRRTSTDVQGLRLPQIYSKSGIPLQRFVMKTSLSNEEKSSVLKACYRQVFERDIAKAYNLSFVDLESQVKNGSLSIKEFIRRIGKSSVYRKQFYEPFVNSRVVELAFKHFLGRGLSSLEEFQKYFSILSLRGLNGLIDALINSLEYADYFAEETCPYLRGLSEEPLESRNWGVQFSLLNYSAPFRKVPQFITLFSDYKMSLPDQHPYGLGNDHLALQFGAIFPNSLTALSNKSAFFGRYTRRILLRQGPGIYSQISNPQARSKSIGSLGPKIFKLNSIDNTYFSDEVMSLPPDIEQIIKAIYLRVFGRFIYLEELSSVRKFESLFRSSKISVRDFIRNLVKSSVFRSLYWEPLYICKAIEYIHYRLLGRPSYGRQEINQYFDIVYREGYYKMIDYLLNSSEYIRSFGDNTVPYERYITSANMILKSNYSNFLYSTLKTKNSNSKKFIELSNILEKRSLNSIQARISQGVSTVRDQYKVFQLTQLSSQVDKRQVVKAIYRQIFERDLNSFAIGDEFINLEKALVNNNITVQQFIEQIGSSSLYGREFYQPYPNTKVIELGTKHFLGRAPNNQAEIRYYNQILASQGLSSFITVLVNSNEYNQVFGVNIVPYRRFTTLPAANFPNTEKLYNTLTKQSSEIIVPSFIVVPGNQ.

(2R,3E)-phycocyanobilin is bound at residue Cys-185. PBS-linker domains follow at residues 242–422 (DVQG…FRKV), 498–680 (KSIG…NSKK), and 694–871 (NSIQ…KQSS).

Belongs to the phycobilisome linker protein family. Post-translationally, contains one covalently linked bilin chromophore. This protein autochromophorylates (Potential).

It is found in the plastid. Its subcellular location is the chloroplast thylakoid membrane. Functionally, this protein is postulated to act both as terminal energy acceptor and as a linker polypeptide that stabilizes the phycobilisome architecture. May have intrinsic bilin lyase activity. In Aglaothamnion neglectum (Red alga), this protein is Phycobiliprotein ApcE (apcE).